The primary structure comprises 216 residues: Putative ripening-related protein 4 (216 aa).

Residues 1-25 (MAANVKVLVVLALLQLMSLHAVVHG) form the signal peptide.

The protein belongs to the kiwellin family.

The protein localises to the secreted. This chain is Putative ripening-related protein 4, found in Oryza sativa subsp. japonica (Rice).